The primary structure comprises 631 residues: ATP-dependent RNA helicase mrh4, mitochondrial (631 aa).

The N-terminal 45 residues, Met1–Arg45, are a transit peptide targeting the mitochondrion. The tract at residues Lys68 to Leu112 is disordered. A compositionally biased stretch (basic and acidic residues) spans Arg98 to Lys108. The Q motif motif lies at Thr141–Arg174. The segment covering Leu180–Ala193 has biased composition (basic and acidic residues). Positions Leu180–Arg199 are disordered. The region spanning Asp194–Leu406 is the Helicase ATP-binding domain. Ala207–Thr214 lines the ATP pocket. Residues Glu229 to Glu249 form a disordered region. Residues Asp353–Asp356 carry the DEAD box motif. The region spanning Gly455–Ile631 is the Helicase C-terminal domain.

The protein belongs to the DEAD box helicase family. MRH4 subfamily.

The protein resides in the mitochondrion. It carries out the reaction ATP + H2O = ADP + phosphate + H(+). In terms of biological role, ATP-binding RNA helicase involved in mitochondrial RNA metabolism. Required for maintenance of mitochondrial DNA. This chain is ATP-dependent RNA helicase mrh4, mitochondrial (mrh4), found in Aspergillus fumigatus (strain ATCC MYA-4609 / CBS 101355 / FGSC A1100 / Af293) (Neosartorya fumigata).